Consider the following 447-residue polypeptide: Exodeoxyribonuclease 7 large subunit (447 aa).

The protein belongs to the XseA family. In terms of assembly, heterooligomer composed of large and small subunits.

The protein localises to the cytoplasm. It carries out the reaction Exonucleolytic cleavage in either 5'- to 3'- or 3'- to 5'-direction to yield nucleoside 5'-phosphates.. Functionally, bidirectionally degrades single-stranded DNA into large acid-insoluble oligonucleotides, which are then degraded further into small acid-soluble oligonucleotides. This Lactobacillus helveticus (strain DPC 4571) protein is Exodeoxyribonuclease 7 large subunit.